A 426-amino-acid polypeptide reads, in one-letter code: Cell cycle checkpoint control protein RAD9B (426 aa).

The residue at position 359 (Ser-359) is a Phosphoserine.

This sequence belongs to the rad9 family. As to quaternary structure, interacts with HUS1, HUS1B, RAD1, RAD9A and RAD17. As to expression, expressed in testis and skeletal muscle.

In Homo sapiens (Human), this protein is Cell cycle checkpoint control protein RAD9B (RAD9B).